We begin with the raw amino-acid sequence, 455 residues long: Serine--tRNA ligase (455 aa).

252-254 lines the L-serine pocket; it reads TAE. Residues 283 to 285 and valine 299 contribute to the ATP site; that span reads RKE. Position 306 (glutamate 306) interacts with L-serine. 370–373 provides a ligand contact to ATP; the sequence is EVVS. Residue threonine 406 participates in L-serine binding.

Belongs to the class-II aminoacyl-tRNA synthetase family. Type-1 seryl-tRNA synthetase subfamily. Homodimer. The tRNA molecule binds across the dimer.

The protein resides in the cytoplasm. It carries out the reaction tRNA(Ser) + L-serine + ATP = L-seryl-tRNA(Ser) + AMP + diphosphate + H(+). The catalysed reaction is tRNA(Sec) + L-serine + ATP = L-seryl-tRNA(Sec) + AMP + diphosphate + H(+). Its pathway is aminoacyl-tRNA biosynthesis; selenocysteinyl-tRNA(Sec) biosynthesis; L-seryl-tRNA(Sec) from L-serine and tRNA(Sec): step 1/1. Its function is as follows. Catalyzes the attachment of serine to tRNA(Ser). Is also able to aminoacylate tRNA(Sec) with serine, to form the misacylated tRNA L-seryl-tRNA(Sec), which will be further converted into selenocysteinyl-tRNA(Sec). This Thermococcus gammatolerans (strain DSM 15229 / JCM 11827 / EJ3) protein is Serine--tRNA ligase.